The following is a 258-amino-acid chain: E3 ubiquitin ligase TRIM40 (258 aa).

Residues 14 to 56 form an RING-type zinc finger; the sequence is CPICQESLKEAVSTNCGHLFCRVCLTQHVEKASASGVFCCPLC. The B box-type zinc finger occupies 66 to 107; that stretch reads GTGYICPNHQKRVCRFCEESRLLLCVECLVSPEHMSHHELTI. 4 residues coordinate Zn(2+): Cys-71, His-74, Cys-93, and His-99. The stretch at 107–159 forms a coiled coil; the sequence is IENALSHYKERLNRRSRKLRKDIAELQRLKAQQEKKLQALQFQVDHGNHRLEA.

It belongs to the TRIM/RBCC family. In terms of assembly, interacts with NEDD8. In terms of tissue distribution, highly expressed in normal gastrointestinal epithelia but that is down-regulated in gastrointestinal carcinomas and chronic inflammatory lesions of the gastrointestinal tract.

It catalyses the reaction S-ubiquitinyl-[E2 ubiquitin-conjugating enzyme]-L-cysteine + [acceptor protein]-L-lysine = [E2 ubiquitin-conjugating enzyme]-L-cysteine + N(6)-ubiquitinyl-[acceptor protein]-L-lysine.. Its function is as follows. E3 ubiquitin-protein ligase that plays a role in the limitation of the innate immune response. Mediates inhibition of the RLR signaling pathway by ubiquitinating RIGI and IFIH1 receptors, leading to their proteasomal degradation. Also promotes the neddylation of IKBKG/NEMO, stabilizing NFKBIA, and thereby inhibiting of NF-kappa-B nuclear translocation and activation. This is E3 ubiquitin ligase TRIM40 (TRIM40) from Homo sapiens (Human).